A 261-amino-acid polypeptide reads, in one-letter code: Ribosomal RNA small subunit methyltransferase G (261 aa).

S-adenosyl-L-methionine contacts are provided by residues Gly-94, Leu-99, 117–119 (EST), 145–146 (VE), and Arg-164.

This sequence belongs to the methyltransferase superfamily. RNA methyltransferase RsmG family.

It is found in the cytoplasm. Its function is as follows. Specifically methylates the N7 position of a guanine in 16S rRNA. In Rubrobacter xylanophilus (strain DSM 9941 / JCM 11954 / NBRC 16129 / PRD-1), this protein is Ribosomal RNA small subunit methyltransferase G.